We begin with the raw amino-acid sequence, 78 residues long: Large ribosomal subunit protein bL28 (78 aa).

A disordered region spans residues 1-23; sequence MSRVCQVTGKRPMVGNNRSHAKN.

It belongs to the bacterial ribosomal protein bL28 family.

The sequence is that of Large ribosomal subunit protein bL28 from Shewanella pealeana (strain ATCC 700345 / ANG-SQ1).